The primary structure comprises 423 residues: Tyrosine--tRNA ligase (423 aa).

Residue tyrosine 35 coordinates L-tyrosine. Residues 40 to 49 (PTAPSLHAGH) carry the 'HIGH' region motif. Positions 170 and 174 each coordinate L-tyrosine. Positions 230-234 (KFGKS) match the 'KMSKS' region motif. An ATP-binding site is contributed by lysine 233. Residues 355-412 (DLITDLLVATGLSASKGAARRTIAEGGVSVNNVKIDSDEWTPQASDFLHGRWLVLRRG) form the S4 RNA-binding domain.

This sequence belongs to the class-I aminoacyl-tRNA synthetase family. TyrS type 1 subfamily. Homodimer.

The protein resides in the cytoplasm. It carries out the reaction tRNA(Tyr) + L-tyrosine + ATP = L-tyrosyl-tRNA(Tyr) + AMP + diphosphate + H(+). Catalyzes the attachment of tyrosine to tRNA(Tyr) in a two-step reaction: tyrosine is first activated by ATP to form Tyr-AMP and then transferred to the acceptor end of tRNA(Tyr). This Mycobacterium sp. (strain JLS) protein is Tyrosine--tRNA ligase.